The primary structure comprises 215 residues: Pyridoxine/pyridoxamine 5'-phosphate oxidase (215 aa).

Residues Arg-11–Tyr-14 and Lys-69 each bind substrate. Residues Arg-64–Lys-69, Tyr-79–Thr-80, Lys-86, and Gln-108 contribute to the FMN site. The substrate site is built by Tyr-126, Arg-130, and Ser-134. FMN-binding positions include Gln-143–Ser-144 and Trp-188. Arg-194 to His-196 contacts substrate. An FMN-binding site is contributed by Arg-198.

Belongs to the pyridoxamine 5'-phosphate oxidase family. Homodimer. The cofactor is FMN.

The enzyme catalyses pyridoxamine 5'-phosphate + O2 + H2O = pyridoxal 5'-phosphate + H2O2 + NH4(+). It catalyses the reaction pyridoxine 5'-phosphate + O2 = pyridoxal 5'-phosphate + H2O2. It functions in the pathway cofactor metabolism; pyridoxal 5'-phosphate salvage; pyridoxal 5'-phosphate from pyridoxamine 5'-phosphate: step 1/1. Its pathway is cofactor metabolism; pyridoxal 5'-phosphate salvage; pyridoxal 5'-phosphate from pyridoxine 5'-phosphate: step 1/1. Catalyzes the oxidation of either pyridoxine 5'-phosphate (PNP) or pyridoxamine 5'-phosphate (PMP) into pyridoxal 5'-phosphate (PLP). This is Pyridoxine/pyridoxamine 5'-phosphate oxidase from Legionella pneumophila (strain Lens).